Here is a 127-residue protein sequence, read N- to C-terminus: Large ribosomal subunit protein bL17 (127 aa).

It belongs to the bacterial ribosomal protein bL17 family. Part of the 50S ribosomal subunit. Contacts protein L32.

The protein is Large ribosomal subunit protein bL17 of Lactobacillus helveticus (strain DPC 4571).